We begin with the raw amino-acid sequence, 371 residues long: Serpentine receptor class delta-1 (371 aa).

Transmembrane regions (helical) follow at residues 31–51, 62–82, 109–129, 148–168, 209–229, 267–287, and 295–315; these read LSEV…YVIF, AVLL…SLLA, CFFC…ILLI, MIVI…FYFW, IPSL…YFII, AIPI…FGII, and ITFR…FIFI. A disordered region spans residues 344–371; sequence EKFNQPPKQPTNPAQQSANNDAAKTEKV. Residues 354-365 show a composition bias toward polar residues; sequence TNPAQQSANNDA.

It belongs to the nematode receptor-like protein srd family.

The protein resides in the membrane. This Caenorhabditis elegans protein is Serpentine receptor class delta-1 (srd-1).